A 510-amino-acid chain; its full sequence is Light-independent protochlorophyllide reductase subunit B (510 aa).

Residue Asp-36 participates in [4Fe-4S] cluster binding. Asp-296 (proton donor) is an active-site residue. Substrate is bound at residue 431-432 (GM).

Belongs to the ChlB/BchB/BchZ family. In terms of assembly, protochlorophyllide reductase is composed of three subunits; ChlL, ChlN and ChlB. Forms a heterotetramer of two ChlB and two ChlN subunits. [4Fe-4S] cluster serves as cofactor.

It localises to the plastid. Its subcellular location is the chloroplast. It catalyses the reaction chlorophyllide a + oxidized 2[4Fe-4S]-[ferredoxin] + 2 ADP + 2 phosphate = protochlorophyllide a + reduced 2[4Fe-4S]-[ferredoxin] + 2 ATP + 2 H2O. It participates in porphyrin-containing compound metabolism; chlorophyll biosynthesis (light-independent). Component of the dark-operative protochlorophyllide reductase (DPOR) that uses Mg-ATP and reduced ferredoxin to reduce ring D of protochlorophyllide (Pchlide) to form chlorophyllide a (Chlide). This reaction is light-independent. The NB-protein (ChlN-ChlB) is the catalytic component of the complex. This chain is Light-independent protochlorophyllide reductase subunit B, found in Physcomitrium patens (Spreading-leaved earth moss).